The primary structure comprises 2209 residues: Orsellinic acid synthase armB (2209 aa).

Positions 38-261 (LLLDACYYAF…HKTTVDALYH (224 aa)) are N-terminal acylcarrier protein transacylase domain (SAT). In terms of domain architecture, Ketosynthase family 3 (KS3) spans 391–817 (QEPIAICGMS…GSNGALLLEE (427 aa)). Catalysis depends on for beta-ketoacyl synthase activity residues cysteine 561, histidine 696, and histidine 736. Residues 914-1239 (VFVFSGQGGQ…NLTLSSSLSQ (326 aa)) form a malonyl-CoA:ACP transacylase (MAT) domain region. The For acyl/malonyl transferase activity role is filled by serine 1008. An N-terminal hotdog fold region spans residues 1306-1436 (MLQSWAQFPS…GQFRPLLVAD (131 aa)). Positions 1306–1613 (MLQSWAQFPS…FKKLRLNTLQ (308 aa)) constitute a PKS/mFAS DH domain. Residues 1335–1610 (ITGHIVGDVP…GMCFKKLRLN (276 aa)) form a product template (PT) domain region. Histidine 1338 (proton acceptor; for dehydratase activity) is an active-site residue. The C-terminal hotdog fold stretch occupies residues 1463–1613 (AEVITTRTAY…FKKLRLNTLQ (151 aa)). The Proton donor; for dehydratase activity role is filled by aspartate 1524. Carrier domains are found at residues 1659 to 1734 (VDVQ…SSTI) and 1844 to 1921 (SSSS…SSKQ). 2 positions are modified to O-(pantetheine 4'-phosphoryl)serine: serine 1693 and serine 1881. The tract at residues 1917-1945 (ISSKQPGKSPKPSEEATMDPDKEEDLSDL) is disordered. A compositionally biased stretch (acidic residues) spans 1932-1943 (ATMDPDKEEDLS). A thioesterase (TE) domain region spans residues 1962–2201 (VPMSVQKSSS…LGAVTQALVD (240 aa)).

It carries out the reaction 3 malonyl-CoA + acetyl-CoA + 2 H(+) = orsellinate + 3 CO2 + 4 CoA. Its pathway is secondary metabolite biosynthesis. Non-reducing polyketide synthase, part of the gene cluster that mediates the biosynthesis of melleolides, a range of antifungal and phytotoxic polyketide derivatives composed of an orsellinic acid (OA) moiety esterified to various sesquiterpene alcohols. The first step in melleolides biosynthesis is performed by the delta(6)-protoilludene synthase PRO1 which catalyzes the cyclization of farnesyl diphosphate to protoilludene. The orsellinic acid synthase armB produces OA by condensing acetyl-CoA with 3 malonyl-CoA units in a three-round chain elongation reaction folowed by a C2-C7 ring closure. ArmB further catalyzes the trans-esterification of OA to the various sesquiterpene alcohols resulting from the hydroxylation of protoilludene. The melleolides cluster also includes 5 cytochrome P450 monooxygenases, 4 NAD(+)-dependent oxidoreductases, one flavin-dependent oxidoreductase, and one O-methyltransferase. The cytochrome P450 monooxygenases may be involved in protoilludene hydroxylation to elaborate melleolides with multiple alcohol groups, such as melleolide D, which carries alcohol functionalities at C-4, C-5, C-10, and C-13. The role of the NAD(+)-dependent enzymes remains unknown. Numerous melleolides, including arnamial, show 5'-O-methylation of the aromatic moiety which may be catalyzed by the methyltransferase encoded in the cluster. The flavin-dependent oxidoreductase might represent the dehydrogenase yielding the aldehyde in position 1 of arnamial and other melleolides. Finally, several halogenase localized outside of the cluster (armH1 to armH5), are able to catalyze the transfer of a single chlorine atom to the melleolide backbone, resulting in a 6'-chloromelleolide product. In Armillaria mellea (Honey mushroom), this protein is Orsellinic acid synthase armB.